Consider the following 423-residue polypeptide: MGSIIVERSKLSGEVEISGAKNSALPLLAAALLTEEEVTLYKVPVLSDVETMIDILRTTGKDVFFDKHKGIVKISGKISITHIQYELVRKMRASFNVLGPIAALVGEASTPLPGGCAIGARPVDFHLEGLKKIGFEISFDHGEIRAKRGKKEEESVVYLPFPSVGATEHIMSTAAILPGKTIIENAAMEPEIIDLQNLLNKMGAKVYGAGTSKIIVEGVEKLHGCEHTIIPDRIEAGTYIIGILATKGEGIVKNIIPEHLEALWFVLEKTGAIIKKGENEVEVKSPDKWYGCDINVLPYPGFPTDLQPQILVYLSLADGSSTVTENVFKTRFAHVAELVRMGANMKIIENTVFINGVEKLYGTTVMGTDLRATAALVIAGLAAEDRTEVTSVEHIFRGYENVIEKFSKLGASIKYIPGGVPEI.

Residue 21–22 (KN) coordinates phosphoenolpyruvate. R92 lines the UDP-N-acetyl-alpha-D-glucosamine pocket. C116 serves as the catalytic Proton donor. Residue C116 is modified to 2-(S-cysteinyl)pyruvic acid O-phosphothioketal. The UDP-N-acetyl-alpha-D-glucosamine site is built by D305 and V327.

The protein belongs to the EPSP synthase family. MurA subfamily.

Its subcellular location is the cytoplasm. The enzyme catalyses phosphoenolpyruvate + UDP-N-acetyl-alpha-D-glucosamine = UDP-N-acetyl-3-O-(1-carboxyvinyl)-alpha-D-glucosamine + phosphate. Its pathway is cell wall biogenesis; peptidoglycan biosynthesis. Cell wall formation. Adds enolpyruvyl to UDP-N-acetylglucosamine. The protein is UDP-N-acetylglucosamine 1-carboxyvinyltransferase of Fervidobacterium nodosum (strain ATCC 35602 / DSM 5306 / Rt17-B1).